The sequence spans 862 residues: Rab GTPase-binding effector protein 1 (862 aa).

Ala2 carries the N-acetylalanine modification. The stretch at 11-345 (DVSLQQRVAE…KKADVEEEIK (335 aa)) forms a coiled coil. At Lys282 the chain carries N6-acetyllysine. Positions 315-338 (ELKKKDQEDDEQQRLNKRKDHKKA) are disordered. 3 positions are modified to phosphoserine: Ser374, Ser377, and Ser407. Phosphothreonine is present on Thr408. Ser410 bears the Phosphoserine mark. The interaction with AP1G1, AP1G2, GGA1, GGA2 and GGA3 stretch occupies residues 435–447 (DESDFGPLVGADS). The stretch at 534–816 (DMCSNYEKQL…LQTELDVSEQ (283 aa)) forms a coiled coil.

Belongs to the rabaptin family. Homodimer when bound to RAB5A. Heterodimer with RABGEF1. The heterodimer binds RAB4A and RAB5A that have been activated by GTP-binding. Interacts with TSC2. Interacts with GGA1 (via GAE domain), GGA2 (via GAE domain) and GGA3 (via GAE domain). Interacts with AP1G1 (via GAE domain). Interacts with AP1G2 (via GAE domain). Interacts with ECPAS. Interacts with KCNH1. Interacts with PKD1 (via C-terminal domain) and GGA1; the interactions recruit PKD1:PKD2 complex to GGA1 and ARL3 at trans-Golgi network. In terms of processing, proteolytic cleavage by caspases in apoptotic cells causes loss of endosome fusion activity.

The protein resides in the cytoplasm. It is found in the early endosome. It localises to the recycling endosome. The protein localises to the cytoplasmic vesicle. In terms of biological role, rab effector protein acting as linker between gamma-adaptin, RAB4A and RAB5A. Involved in endocytic membrane fusion and membrane trafficking of recycling endosomes. Involved in KCNH1 channels trafficking to and from the cell membrane. Stimulates RABGEF1 mediated nucleotide exchange on RAB5A. Mediates the traffic of PKD1:PKD2 complex from the endoplasmic reticulum through the Golgi to the cilium. This is Rab GTPase-binding effector protein 1 (RABEP1) from Homo sapiens (Human).